Consider the following 158-residue polypeptide: 2-C-methyl-D-erythritol 2,4-cyclodiphosphate synthase (158 aa).

A divalent metal cation-binding residues include D9 and H11. Residues 9-11 and 35-36 contribute to the 4-CDP-2-C-methyl-D-erythritol 2-phosphate site; these read DVH and HS. H43 contacts a divalent metal cation. Residues 57–59, 62–66, 101–107, 133–136, F140, and R143 contribute to the 4-CDP-2-C-methyl-D-erythritol 2-phosphate site; these read DIG, FPDTD, AQKPKMA, and TTTE.

It belongs to the IspF family. As to quaternary structure, homotrimer. It depends on a divalent metal cation as a cofactor.

The catalysed reaction is 4-CDP-2-C-methyl-D-erythritol 2-phosphate = 2-C-methyl-D-erythritol 2,4-cyclic diphosphate + CMP. The protein operates within isoprenoid biosynthesis; isopentenyl diphosphate biosynthesis via DXP pathway; isopentenyl diphosphate from 1-deoxy-D-xylulose 5-phosphate: step 4/6. Functionally, involved in the biosynthesis of isopentenyl diphosphate (IPP) and dimethylallyl diphosphate (DMAPP), two major building blocks of isoprenoid compounds. Catalyzes the conversion of 4-diphosphocytidyl-2-C-methyl-D-erythritol 2-phosphate (CDP-ME2P) to 2-C-methyl-D-erythritol 2,4-cyclodiphosphate (ME-CPP) with a corresponding release of cytidine 5-monophosphate (CMP). This Bacillus thuringiensis subsp. konkukian (strain 97-27) protein is 2-C-methyl-D-erythritol 2,4-cyclodiphosphate synthase.